The primary structure comprises 449 residues: Cysteine--tRNA ligase (449 aa).

Zn(2+) is bound at residue C30. Residues 32 to 42 (PTVYDRAHLGN) carry the 'HIGH' region motif. Residues C210, H235, and E239 each contribute to the Zn(2+) site. The 'KMSKS' region signature appears at 268–272 (KMSKS). K271 serves as a coordination point for ATP.

Belongs to the class-I aminoacyl-tRNA synthetase family. As to quaternary structure, monomer. Zn(2+) serves as cofactor.

Its subcellular location is the cytoplasm. The catalysed reaction is tRNA(Cys) + L-cysteine + ATP = L-cysteinyl-tRNA(Cys) + AMP + diphosphate. This Acidiphilium cryptum (strain JF-5) protein is Cysteine--tRNA ligase.